Reading from the N-terminus, the 215-residue chain is Peroxiredoxin 1 (215 aa).

One can recognise a Thioredoxin domain in the interval 2-158 (VKLYSKFPDV…LLRITKAAIV (157 aa)). The Cysteine sulfenic acid (-SOH) intermediate role is filled by C46. R121 is a binding site for substrate.

It belongs to the peroxiredoxin family. Prx6 subfamily. As to quaternary structure, homodecamer. Pentamer of dimers that assemble into a ring structure.

It is found in the cytoplasm. It carries out the reaction a hydroperoxide + [thioredoxin]-dithiol = an alcohol + [thioredoxin]-disulfide + H2O. Functionally, thiol-specific peroxidase that catalyzes the reduction of hydrogen peroxide and organic hydroperoxides to water and alcohols, respectively. Plays a role in cell protection against oxidative stress by detoxifying peroxides. In Sulfurisphaera tokodaii (strain DSM 16993 / JCM 10545 / NBRC 100140 / 7) (Sulfolobus tokodaii), this protein is Peroxiredoxin 1.